Reading from the N-terminus, the 1080-residue chain is MSTSQSLNIIPIEYSLQTYQRSNQDTSMLHRPVVKEGEWVQAGDLLSDCASSIGGEFSIGQNILIAYLPWEGYNYEDAILISERLVYDDLYTSIHIERYDISTEKNPYGIEKITKDIVLLKDTTELNHLDKNGIAQLGAWLKEGDILVGKITPTESKKEVARYVQLYNDILGKKINYAIRDSSLRVPRGLEAKVIRVKTFPERKNETKNWENKIGLKSKALAFSVQHFLSKNQSNKKRTLSLKSKWEKETSLSSFSSLAWQKKSPLFFVFKNGIFEKLKNFPKKKKKNERVFALKKKSSKKFRFFELQKKFRFFFRNFFFFKAPKKKSPLFFFFKSETFDKERNFQKMSPNQSKQNWVKISIKKEWQKVGSFGKKKASKGKISFFPSFPQASLVGKASFFSPSRFEKKRDASNFLKSSCISSVHIYLAEKRKVQVGDKMAGRHGNKGIISQILPRQDMPYLPDGTPIDMALNPLGVPSRMNVGQIYECLLGLAGKHLGEQYRIQPFDEAFGPEASRSFVFSKLYSAKTKTGQSWLFQPTNPGKLKLFDGRTGNCFDQAITTGYSYMIKLVHLVDEKIHCLTVDHEVLTTKGWIPLNKVKTSHFVATLKKNGQLVYQNPTNIYHYPEFKGELYHIKNVNLDLLVTLNHRMYVKNGIIEATSSVDYQLIPAKDIVGQHKKYCKTAFWDKENYQFILPSVISNSIVIPEKTMNMEAWLQFFGIWIAEGWALTNTISNNNVTNFNQSSSSPYVVQISIKKKKVLEILNNVIPILGYSFNYYDNNITICDKQLWAYLRPLSLGNPYRKLPIWVWDLSQDQARVLLLAMITVFKNGTNSKWEKAASLSSRLSLASVFPEFLKKRIDKGLSYYTSSVELADDISRLALHAGWSGNNYLLKKKGSISSFDGKQIICQFDIWRISIIQSKNQPAVNHGYHSKGKEEVLPYQGAVYCLSVPNEIFYVRRNGLSVWTGNSRSSGPYSLITQQPLKGRSKHGGQRLGEMEVWAIEAYGAAFTLLELLTIKSDDVTGRLTIWDYVLYKKPLYIGTPASFKVLICELQALCLDIGIYKADKSNILKQINVSSMG.

Belongs to the RNA polymerase beta chain family. As to quaternary structure, in plastids the minimal PEP RNA polymerase catalytic core is composed of four subunits: alpha, beta, beta', and beta''. When a (nuclear-encoded) sigma factor is associated with the core the holoenzyme is formed, which can initiate transcription.

It is found in the plastid. The protein resides in the chloroplast. The enzyme catalyses RNA(n) + a ribonucleoside 5'-triphosphate = RNA(n+1) + diphosphate. In terms of biological role, DNA-dependent RNA polymerase catalyzes the transcription of DNA into RNA using the four ribonucleoside triphosphates as substrates. The polypeptide is DNA-directed RNA polymerase subunit beta C-terminal section (rpoB2) (Stigeoclonium helveticum (Green alga)).